The following is a 931-amino-acid chain: MAETLSGLGDSGAASAAAVSSAASETGTRRLSDLRVIDLRAELRKRNLTSSGNKSVLMERLKKAIEEEGGNPDEIEVISEGNKKMPKRPSKGKKPEDEGVEDNGLEENSGDGQEDVETSLENLQDMDMMDISVLDEADIDNGSVADCVEEEEEATLPEGLGLLRIGRLQSKGLPEQLQELAIDDKEAINNVDTSSSDFTILQEMEEASLEPENEKILDILGETCKSEPVKEEGSELEQPFAQATSSVGPDRKLAEEEDLFESCGHPEEEEEEEEEEEQEEEQEEEGDLALASSSKSESSSTRCQWSEADALLAVVKREPAEAPGGGTGMDREPVGLEEPVEQSSTAAQLPETTSQELVRAPTAAPSPEPRDSKDDVKKFAFDACNDVPAAPKESSASEGADQKMSSVEDDSDTKRLSREEKGRSSCGRNFWVSGLSSTTRATDLKNLFSRYGKVVGAKVVTNARSPGARCYGFVTMSTAEEATKCINHLHKTELHGKMISVEKAKSEPAGKRVPDRRDGDSKKEKTSTSDRSANLKREEKGDRKDDAKKTDDGSTEKSKDADDQKPGPSERSRTTKSGSRGTERTVVMDKSKGVPVISVKTSGSKERASKSQDRKSVSREKRSVVSFDKVKESRKSRDSESRRERERERSEREQRLQAQWEREERERLEIARERLAFHRHRLERERMERERLERERMHVEQERRREQERIHREREELRRQQELRYEQERRPAVRRPYEVDGRRDDAYWPEAKRAALDDRYHSDFSRQDRFHDFDHRDRGRYPNHSVDRREGSRSMMGDREGQHYPERHGGPERHGRDSRDGWGYGSNKRLSEGRGLPLLPRRDWGEHARRLEDDRAWQGTADGGMMERDQQRWQGGERSMSGHSGPGHMMNRGGMSGRGSFAPGGASRRHVIPRGGMQAGFGGTEPGQQTQ.

The span at 1 to 24 (MAETLSGLGDSGAASAAAVSSAAS) shows a compositional bias: low complexity. The segment at 1-35 (MAETLSGLGDSGAASAAAVSSAASETGTRRLSDLR) is disordered. The residue at position 2 (Ala-2) is an N-acetylalanine. Phosphoserine occurs at positions 24 and 55. Residues 31–65 (LSDLRVIDLRAELRKRNLTSSGNKSVLMERLKKAI) enclose the SAP domain. A disordered region spans residues 64 to 121 (AIEEEGGNPDEIEVISEGNKKMPKRPSKGKKPEDEGVEDNGLEENSGDGQEDVETSLE). Positions 67 to 77 (EEGGNPDEIEV) are enriched in acidic residues. The residue at position 79 (Ser-79) is a Phosphoserine. Residues 98–118 (EGVEDNGLEENSGDGQEDVET) are compositionally biased toward acidic residues. Residues Lys-171 and Lys-185 each participate in a glycyl lysine isopeptide (Lys-Gly) (interchain with G-Cter in SUMO2) cross-link. Ser-194, Ser-196, and Ser-208 each carry phosphoserine. Disordered stretches follow at residues 205–304 (EEAS…TRCQ) and 316–430 (KREP…GRNF). Residues 224-233 (CKSEPVKEEG) show a composition bias toward basic and acidic residues. Residue Lys-230 forms a Glycyl lysine isopeptide (Lys-Gly) (interchain with G-Cter in SUMO) linkage. The segment covering 267–287 (EEEEEEEEEEEQEEEQEEEGD) has biased composition (acidic residues). Lys-316 participates in a covalent cross-link: Glycyl lysine isopeptide (Lys-Gly) (interchain with G-Cter in SUMO). Residues 341 to 356 (EQSSTAAQLPETTSQE) are compositionally biased toward polar residues. The span at 368 to 380 (EPRDSKDDVKKFA) shows a compositional bias: basic and acidic residues. Residue Lys-403 forms a Glycyl lysine isopeptide (Lys-Gly) (interchain with G-Cter in SUMO2) linkage. Phosphoserine is present on residues Ser-405 and Ser-406. Positions 412–423 (DTKRLSREEKGR) are enriched in basic and acidic residues. A Glycyl lysine isopeptide (Lys-Gly) (interchain with G-Cter in SUMO2) cross-link involves residue Lys-414. One can recognise an RRM domain in the interval 428 to 506 (RNFWVSGLSS…KMISVEKAKS (79 aa)). Ser-437 bears the Phosphoserine mark. 2 stretches are compositionally biased toward basic and acidic residues: residues 500–573 (SVEK…ERSR) and 581–592 (GTERTVVMDKSK). 4 disordered regions span residues 500–663 (SVEK…WERE), 691–720 (RLERERMHVEQERRREQERIHREREELRRQ), 759–843 (RYHS…PRRD), and 872–931 (RWQG…QQTQ). Residues Lys-505, Lys-536, Lys-565, and Lys-592 each participate in a glycyl lysine isopeptide (Lys-Gly) (interchain with G-Cter in SUMO2) cross-link. Residues 550–816 (TDDGSTEKSK…RHGGPERHGR (267 aa)) form an interaction with POLR2A; SFRS1; SFRS9 and SFRS10 region. Lys-600 participates in a covalent cross-link: Glycyl lysine isopeptide (Lys-Gly) (interchain with G-Cter in SUMO1); alternate. Residue Lys-600 forms a Glycyl lysine isopeptide (Lys-Gly) (interchain with G-Cter in SUMO2); alternate linkage. Residues Ser-602, Ser-604, Ser-623, and Ser-626 each carry the phosphoserine modification. Residues 603 to 663 (GSKERASKSQ…QRLQAQWERE (61 aa)) are compositionally biased toward basic and acidic residues. A Nuclear localization signal motif is present at residues 621–638 (KRSVVSFDKVKESRKSRD). N6-acetyllysine is present on Lys-629. The segment covering 759–820 (RYHSDFSRQD…PERHGRDSRD (62 aa)) has biased composition (basic and acidic residues). Arg-834 carries the post-translational modification Omega-N-methylarginine. Arg-892, Arg-898, Arg-908, and Arg-914 each carry asymmetric dimethylarginine.

As to quaternary structure, monomer and homodimer. Interacts with KHDRBS3. Interacts with CLK2. Interacts with POLR2A, ASF/SRSF1, SRp30c/SRFS9 and TRA2B/SFRS10. Interacts with SRPK1 and inhibits its activity. Interacts with RBMX. Interacts with FUS. Interacts with ZBED4. Phosphorylated by CDC-like kinase 2 (CLK2). Post-translationally, sumoylated by PIAS1 with SUMO1 and SUMO2/3, desumoylated by SENP1. Sumoylation is required for transcriptional repressor activity.

It localises to the nucleus. Binds to scaffold/matrix attachment region (S/MAR) DNA and forms a molecular assembly point to allow the formation of a 'transcriptosomal' complex (consisting of SR proteins and RNA polymerase II) coupling transcription and RNA processing. Functions as an estrogen receptor corepressor and can also bind to the HSP27 promoter and decrease its transcription. Thereby acts as a negative regulator of cell proliferation. When associated with RBMX, binds to and stimulates transcription from the SREBF1 promoter. This Rattus norvegicus (Rat) protein is Scaffold attachment factor B1 (Safb).